Reading from the N-terminus, the 57-residue chain is Small ribosomal subunit protein eS31 (57 aa).

C29, C32, C47, and C50 together coordinate Zn(2+). Residues 29–50 (CPRCGPGVFMANHKDRWSCGRC) form a C4-type zinc finger.

The protein belongs to the eukaryotic ribosomal protein eS31 family. In terms of assembly, part of the 30S ribosomal subunit. The cofactor is Zn(2+).

In Thermococcus kodakarensis (strain ATCC BAA-918 / JCM 12380 / KOD1) (Pyrococcus kodakaraensis (strain KOD1)), this protein is Small ribosomal subunit protein eS31.